We begin with the raw amino-acid sequence, 182 residues long: uncharacterized protein (182 aa).

The protein localises to the plastid. It localises to the cyanelle. This is an uncharacterized protein from Cyanophora paradoxa.